Reading from the N-terminus, the 169-residue chain is S-ribosylhomocysteine lyase (169 aa).

Fe cation is bound by residues His-54, His-58, and Cys-128.

Belongs to the LuxS family. In terms of assembly, homodimer. Requires Fe cation as cofactor.

The catalysed reaction is S-(5-deoxy-D-ribos-5-yl)-L-homocysteine = (S)-4,5-dihydroxypentane-2,3-dione + L-homocysteine. Its function is as follows. Involved in the synthesis of autoinducer 2 (AI-2) which is secreted by bacteria and is used to communicate both the cell density and the metabolic potential of the environment. The regulation of gene expression in response to changes in cell density is called quorum sensing. Catalyzes the transformation of S-ribosylhomocysteine (RHC) to homocysteine (HC) and 4,5-dihydroxy-2,3-pentadione (DPD). The protein is S-ribosylhomocysteine lyase of Shewanella sediminis (strain HAW-EB3).